A 114-amino-acid chain; its full sequence is Ferredoxin (114 aa).

[3Fe-4S] cluster contacts are provided by Cys9 and Cys17. 4 residues coordinate [4Fe-4S] cluster: Cys21, Cys40, Cys43, and Cys46. The 4Fe-4S ferredoxin-type domain maps to Arg31–Asp60. A [3Fe-4S] cluster-binding site is contributed by Cys50.

It depends on [4Fe-4S] cluster as a cofactor. [3Fe-4S] cluster serves as cofactor.

Its function is as follows. Ferredoxins are iron-sulfur proteins that transfer electrons in a wide variety of metabolic reactions. This chain is Ferredoxin (fdxA), found in Mycobacterium tuberculosis (strain ATCC 25618 / H37Rv).